The following is a 186-amino-acid chain: Signal peptidase I (186 aa).

The Cytoplasmic segment spans residues 1–19 (MTEEKSTNKKNSLFEWVKA). Residues 20–40 (IIIAVVLALLIRAFLFEPYLV) traverse the membrane as a helical segment. Topologically, residues 41–186 (EGTSMDPTLH…FPFNEIRKTD (146 aa)) are extracellular. Active-site residues include S44 and K86.

It belongs to the peptidase S26 family.

Its subcellular location is the cell membrane. It catalyses the reaction Cleavage of hydrophobic, N-terminal signal or leader sequences from secreted and periplasmic proteins.. This chain is Signal peptidase I (lepB), found in Bacillus licheniformis.